Here is a 299-residue protein sequence, read N- to C-terminus: Endonuclease G, mitochondrial (299 aa).

Residues 1–48 (MQLLRAGLTLALGAGLGAAAESWWRQRADARATPGLLSRLPVLPVAAA) constitute a mitochondrion transit peptide. Phosphothreonine is present on threonine 130. Histidine 143 acts as the Proton acceptor in catalysis. Asparagine 174 is a binding site for Mg(2+). The tract at residues 288-298 (AGSLKAITAGS) is essential for deoxyribonuclease activity. At serine 290 the chain carries Phosphoserine.

This sequence belongs to the DNA/RNA non-specific endonuclease family. In terms of assembly, homodimer; disulfide-linked. Homodimerization is essential for its activity. Interacts with YWHAG. Requires Mg(2+) as cofactor. Post-translationally, GSK3-beta-mediated dual phosphorylations at Thr-130 and Ser-290 is necessary for its interaction with YWHAG and the induction of autophagy.

The protein resides in the mitochondrion. In terms of biological role, endonuclease that preferentially catalyzes the cleavage of double-stranded 5-hydroxymethylcytosine (5hmC)-modified DNA. The 5hmC-modified nucleotide does not increase the binding affinity, but instead increases the efficiency of cutting and specifies the site of cleavage for the modified DNAs. Shows significantly higher affinity for four- stranded Holliday junction over duplex and single-stranded DNAs. Promotes conservative recombination when the DNA is 5hmC-modified. Promotes autophagy through the suppression of mTOR by its phosphorylation-mediated interaction with YWHAG and its endonuclease activity-mediated DNA damage response. GSK3-beta mediated phosphorylation of ENDOG enhances its interaction with YWHAG, leading to the release of TSC2 and PIK3C3 from YWHAG resulting in mTOR pathway suppression and autophagy initiation. Promotes cleavage of mtDNA in response to oxidative and nitrosative stress, in turn inducing compensatory mtDNA replication. This is Endonuclease G, mitochondrial (ENDOG) from Bos taurus (Bovine).